A 757-amino-acid chain; its full sequence is Polymeric immunoglobulin receptor (757 aa).

An N-terminal signal peptide occupies residues 1–18 (MSRLFLACLLAIFPVVSM). Residues 19 to 126 (KSPIFGPEEV…RGLNFDVSLE (108 aa)) form the Ig-like V-type 1; required for binding to polymeric IgA and IgM domain. The Extracellular portion of the chain corresponds to 19 to 632 (KSPIFGPEEV…TGYSGSSKAL (614 aa)). Disulfide bonds link C40–C110, C56–C64, C152–C220, C257–C324, C271–C279, C370–C440, and C384–C394. Residue N83 is glycosylated (N-linked (GlcNAc...) asparagine). 4 Ig-like V-type domains span residues 145-237 (GRTV…DLQV), 250-341 (RSSV…VQAW), 353-457 (ASPS…LKVV), and 461-560 (PSLK…VYVA). N420 and N468 each carry an N-linked (GlcNAc...) asparagine glycan. 3 disulfide bridges follow: C481/C543, C485/C519, and C495/C502. Residues 607–627 (KDAAGGPGAPADPGRPTGYSG) form a disordered region. A helical transmembrane segment spans residues 633-653 (VSTLVPLALVLVAGVVAIGVV). The Cytoplasmic portion of the chain corresponds to 654 to 757 (RARHRKNVDR…AATQNGPTEA (104 aa)). Phosphoserine occurs at positions 665, 674, 681, and 727. The span at 679-688 (ENSRDFEGRD) shows a compositional bias: basic and acidic residues. The interval 679 to 730 (ENSRDFEGRDNMGASPEAQETSLGGKDEFATTTEDTVESKEPKKAKRSSKEE) is disordered.

Interacts (mainly via CDR1-like domain) with dimeric IgA. Interacts (mainly via CDR2-like domain) with pentameric IgM. In terms of assembly, either free or part of the secretory IgA (sIgA) complex that consists of two, four or five IgA monomers, and two additional non-Ig polypeptides, namely the JCHAIN and the secretory component (the proteolytic product of PIGR). Free secretory component interacts with bacterial antigens toxA of C.difficile and eae of E.coli. Post-translationally, in the absence of dimeric IgA, Ser-727 is phosphorylated which allows PIGR to function normally. N-glycosylated. N-glycosylation is required for anchoring IgA molecules to mucus, but is not necessary for Ig binding. In terms of tissue distribution, found in mammary gland, jejunum, lung, kidney and small intestine.

The protein localises to the cell membrane. Its subcellular location is the secreted. Its function is as follows. Mediates selective transcytosis of polymeric IgA and IgM across mucosal epithelial cells. Binds polymeric IgA and IgM at the basolateral surface of epithelial cells. The complex is then transported across the cell to be secreted at the apical surface. During this process, a cleavage occurs that separates the extracellular (known as the secretory component) from the transmembrane segment. In terms of biological role, through its N-linked glycans ensures anchoring of secretory IgA (sIgA) molecules to mucus lining the epithelial surface to neutralize extracellular pathogens. On its own (free form) may act as a non-specific microbial scavenger to prevent pathogen interaction with epithelial cells. In Bos taurus (Bovine), this protein is Polymeric immunoglobulin receptor (PIGR).